We begin with the raw amino-acid sequence, 312 residues long: Ribosomal protein L11 methyltransferase (312 aa).

Thr163, Gly184, Asp206, and Asn248 together coordinate S-adenosyl-L-methionine.

Belongs to the methyltransferase superfamily. PrmA family.

It is found in the cytoplasm. The enzyme catalyses L-lysyl-[protein] + 3 S-adenosyl-L-methionine = N(6),N(6),N(6)-trimethyl-L-lysyl-[protein] + 3 S-adenosyl-L-homocysteine + 3 H(+). Methylates ribosomal protein L11. This Clostridium botulinum (strain Hall / ATCC 3502 / NCTC 13319 / Type A) protein is Ribosomal protein L11 methyltransferase.